The primary structure comprises 342 residues: tRNA N6-adenosine threonylcarbamoyltransferase (342 aa).

Residues His-111 and His-115 each contribute to the Fe cation site. Residues 134-138, Asp-167, Gly-180, Asp-184, and Asn-273 each bind substrate; that span reads LVSGG. Asp-298 lines the Fe cation pocket.

The protein belongs to the KAE1 / TsaD family. The cofactor is Fe(2+).

The protein localises to the cytoplasm. The enzyme catalyses L-threonylcarbamoyladenylate + adenosine(37) in tRNA = N(6)-L-threonylcarbamoyladenosine(37) in tRNA + AMP + H(+). Its function is as follows. Required for the formation of a threonylcarbamoyl group on adenosine at position 37 (t(6)A37) in tRNAs that read codons beginning with adenine. Is involved in the transfer of the threonylcarbamoyl moiety of threonylcarbamoyl-AMP (TC-AMP) to the N6 group of A37, together with TsaE and TsaB. TsaD likely plays a direct catalytic role in this reaction. In Gloeobacter violaceus (strain ATCC 29082 / PCC 7421), this protein is tRNA N6-adenosine threonylcarbamoyltransferase.